Consider the following 202-residue polypeptide: Probable GTP-binding protein EngB (202 aa).

Residues valine 26 to isoleucine 200 form the EngB-type G domain. Residues glycine 34–serine 41, glycine 61–threonine 65, aspartate 79–glycine 82, asparagine 146–aspartate 149, and phenylalanine 179–serine 181 contribute to the GTP site. Mg(2+)-binding residues include serine 41 and threonine 63.

Belongs to the TRAFAC class TrmE-Era-EngA-EngB-Septin-like GTPase superfamily. EngB GTPase family. The cofactor is Mg(2+).

Its function is as follows. Necessary for normal cell division and for the maintenance of normal septation. This Baumannia cicadellinicola subsp. Homalodisca coagulata protein is Probable GTP-binding protein EngB.